The chain runs to 448 residues: Delta(14)-sterol reductase ERG24 (448 aa).

Helical transmembrane passes span 18-38 (ISGA…FYLL), 75-95 (CWSA…LLPG), 108-128 (VLNY…LLLA), 157-177 (IIIC…ISFI), 251-271 (VTDS…DGVL), 279-299 (MIDI…LAWV), and 318-338 (NLGW…FYIF). NADP(+)-binding positions include lysine 345, arginine 349, leucine 368, tryptophan 373, and 380–381 (NY). Residues 394-414 (PTGFQTPLTYFYVIYFASLLI) form a helical membrane-spanning segment. Residues aspartate 420, 424–428 (CRAKY), and tyrosine 435 contribute to the NADP(+) site.

This sequence belongs to the ERG4/ERG24 family.

It localises to the endoplasmic reticulum membrane. It catalyses the reaction 4,4-dimethyl-5alpha-cholesta-8,24-dien-3beta-ol + NADP(+) = 4,4-dimethyl-5alpha-cholesta-8,14,24-trien-3beta-ol + NADPH + H(+). The protein operates within steroid biosynthesis; zymosterol biosynthesis; zymosterol from lanosterol: step 2/6. Its function is as follows. C-14 sterol reductase; part of the third module of ergosterol biosynthesis pathway that includes the late steps of the pathway. ERG24 reduces the C14=C15 double bond of 4,4-dimethyl-cholesta-8,14,24-trienol to produce 4,4-dimethyl-cholesta-8,24-dienol. The third module or late pathway involves the ergosterol synthesis itself through consecutive reactions that mainly occur in the endoplasmic reticulum (ER) membrane. Firstly, the squalene synthase ERG9 catalyzes the condensation of 2 farnesyl pyrophosphate moieties to form squalene, which is the precursor of all steroids. Squalene synthase is crucial for balancing the incorporation of farnesyl diphosphate (FPP) into sterol and nonsterol isoprene synthesis. Secondly, the squalene epoxidase ERG1 catalyzes the stereospecific oxidation of squalene to (S)-2,3-epoxysqualene, which is considered to be a rate-limiting enzyme in steroid biosynthesis. Then, the lanosterol synthase ERG7 catalyzes the cyclization of (S)-2,3 oxidosqualene to lanosterol, a reaction that forms the sterol core. In the next steps, lanosterol is transformed to zymosterol through a complex process involving various demethylation, reduction and desaturation reactions. The lanosterol 14-alpha-demethylase ERG11 (also known as CYP51) catalyzes C14-demethylation of lanosterol to produce 4,4'-dimethyl cholesta-8,14,24-triene-3-beta-ol, which is critical for ergosterol biosynthesis. The C-14 reductase ERG24 reduces the C14=C15 double bond of 4,4-dimethyl-cholesta-8,14,24-trienol to produce 4,4-dimethyl-cholesta-8,24-dienol. 4,4-dimethyl-cholesta-8,24-dienol is substrate of the C-4 demethylation complex ERG25-ERG26-ERG27 in which ERG25 catalyzes the three-step monooxygenation required for the demethylation of 4,4-dimethyl and 4alpha-methylsterols, ERG26 catalyzes the oxidative decarboxylation that results in a reduction of the 3-beta-hydroxy group at the C-3 carbon to an oxo group, and ERG27 is responsible for the reduction of the keto group on the C-3. ERG28 has a role as a scaffold to help anchor ERG25, ERG26 and ERG27 to the endoplasmic reticulum and ERG29 regulates the activity of the iron-containing C4-methylsterol oxidase ERG25. Then, the sterol 24-C-methyltransferase ERG6 catalyzes the methyl transfer from S-adenosyl-methionine to the C-24 of zymosterol to form fecosterol. The C-8 sterol isomerase ERG2 catalyzes the reaction which results in unsaturation at C-7 in the B ring of sterols and thus converts fecosterol to episterol. The sterol-C5-desaturase ERG3 then catalyzes the introduction of a C-5 double bond in the B ring to produce 5-dehydroepisterol. The C-22 sterol desaturase ERG5 further converts 5-dehydroepisterol into ergosta-5,7,22,24(28)-tetraen-3beta-ol by forming the C-22(23) double bond in the sterol side chain. Finally, ergosta-5,7,22,24(28)-tetraen-3beta-ol is substrate of the C-24(28) sterol reductase ERG4 to produce ergosterol. In Candida albicans (strain SC5314 / ATCC MYA-2876) (Yeast), this protein is Delta(14)-sterol reductase ERG24.